Reading from the N-terminus, the 484-residue chain is Glutamate--tRNA ligase (484 aa).

The 'HIGH' region motif lies at P11 to N21. The 'KMSKS' region motif lies at K255–R259. Residue K258 participates in ATP binding.

The protein belongs to the class-I aminoacyl-tRNA synthetase family. Glutamate--tRNA ligase type 1 subfamily. Monomer.

The protein localises to the cytoplasm. It catalyses the reaction tRNA(Glu) + L-glutamate + ATP = L-glutamyl-tRNA(Glu) + AMP + diphosphate. Functionally, catalyzes the attachment of glutamate to tRNA(Glu) in a two-step reaction: glutamate is first activated by ATP to form Glu-AMP and then transferred to the acceptor end of tRNA(Glu). This chain is Glutamate--tRNA ligase, found in Streptococcus suis (strain 98HAH33).